A 360-amino-acid polypeptide reads, in one-letter code: 3-isopropylmalate dehydrogenase (360 aa).

76–89 (GPKWDKIERDIRPE) is an NAD(+) binding site. R96, R106, R134, and D224 together coordinate substrate. Residues D224, D248, and D252 each contribute to the Mg(2+) site. NAD(+) is bound at residue 282 to 294 (GSAPDIAGQGIAN).

The protein belongs to the isocitrate and isopropylmalate dehydrogenases family. LeuB type 1 subfamily. Homodimer. Requires Mg(2+) as cofactor. It depends on Mn(2+) as a cofactor.

The protein localises to the cytoplasm. It carries out the reaction (2R,3S)-3-isopropylmalate + NAD(+) = 4-methyl-2-oxopentanoate + CO2 + NADH. Its pathway is amino-acid biosynthesis; L-leucine biosynthesis; L-leucine from 3-methyl-2-oxobutanoate: step 3/4. Functionally, catalyzes the oxidation of 3-carboxy-2-hydroxy-4-methylpentanoate (3-isopropylmalate) to 3-carboxy-4-methyl-2-oxopentanoate. The product decarboxylates to 4-methyl-2 oxopentanoate. The sequence is that of 3-isopropylmalate dehydrogenase from Pseudomonas fluorescens (strain ATCC BAA-477 / NRRL B-23932 / Pf-5).